A 275-amino-acid polypeptide reads, in one-letter code: uncharacterized protein (275 aa).

Residues 1-162 (NLFSVIVSLI…ITSYWTEVQR (162 aa)) enclose the ABC transmembrane type-1 domain. Transmembrane regions (helical) follow at residues 21-41 (LYLV…GNIM), 106-126 (IMNL…YYLM), and 137-157 (FAYV…TSYW).

The protein resides in the cell membrane. This is an uncharacterized protein from Staphylococcus epidermidis.